The chain runs to 387 residues: O-methyltransferase lepI (387 aa).

Substrate is bound at residue 135–148 (FENLWPVLMALPDF). Residues 175–195 (CFHWLATQPTRIANFKVLLTD) form a substrate binding region. S-adenosyl-L-methionine contacts are provided by residues 227 to 228 (GG), Asp-252, 275 to 276 (NF), and Arg-291.

Belongs to the class I-like SAM-binding methyltransferase superfamily. Cation-independent O-methyltransferase family.

O-methyltransferase; part of the gene cluster 23 that mediates the biosynthesis of a family of 2-pyridones known as leporins. The hybrid PKS-NRPS synthetase lepA and the enoyl reductase lepG are responsible for fusion of phenylalanine with a hexaketide and subsequent release of the stable tetramic acid precursor, pre-leporin C. Because lepA lacks a designated enoylreductase (ER) domain, the required activity is provided the enoyl reductase lepG. It is possible that the dehydrogenase lepF also participates in production of pre-leporin C. Cytochrome P450 monooxygenase lepH is then required for the ring expansion step to yield leporin C. Leporin C is then presumably further oxidized by the N-hydroxylase lepD to form leporin B. LepI may possess a function in biosynthesis upstream of lepA. Leporin B is further oxidized in the presence of ferric ion to give the leporin B trimer-iron chelate, but whether or not this reaction is catalyzed by an enzyme in the pathway or by ferric ion is not determined yet. The sequence is that of O-methyltransferase lepI from Aspergillus flavus (strain ATCC 200026 / FGSC A1120 / IAM 13836 / NRRL 3357 / JCM 12722 / SRRC 167).